A 231-amino-acid polypeptide reads, in one-letter code: 6-hydroxymethyl-7,8-dihydropterin pyrophosphokinase (231 aa).

It belongs to the archaeal 6-HMPDK family. Mg(2+) serves as cofactor.

It catalyses the reaction 6-hydroxymethyl-7,8-dihydropterin + ATP = (7,8-dihydropterin-6-yl)methyl diphosphate + AMP + H(+). Functionally, catalyzes the transfer of diphosphate from ATP to 6-hydroxymethyl-7,8-dihydropterin (6-HMD), leading to 6-hydroxymethyl-7,8-dihydropterin diphosphate (6-HMDP). To a lesser extent, can also use CTP, UTP, and GTP as the nucleotide triphosphate substrate. This chain is 6-hydroxymethyl-7,8-dihydropterin pyrophosphokinase, found in Pyrococcus furiosus (strain ATCC 43587 / DSM 3638 / JCM 8422 / Vc1).